Consider the following 529-residue polypeptide: MKISYFFVASLSYVSVARASQSFEERCTDFRDSINSLPNVQATIVEYVAGSQNVSLPDNDPSCNQSSQFVTADICRAAMVVKTSNSSQIVMEAWFPRNYTGRFLATGNGGFGGCIRYPELDYTTRLGFAAVATNNGHNGTSAEAFLNSPEVLRDFADRSIHTAAKVGKELTKRFYAEGFRKSYYLGCSTGGRQGFKSVQQYPHDFDGVVAGAPAVHEVNLISWAGHIYEITGNKSEETYLPPALWNIVHSEVMRQCDGLDGAQDNLIEDPDLCHPTFENIMCPSDNKSNNGSLSCITEAQANTVIQLMSPYYNTDGSMLFPGMQPGSETVSSALLYTGVPTPYAKEWFRYVVYNDTNWDPTTFNIKDAQAALKQNPFNIQTWEGDLSRFQNAGGKIITYHGMQDFLVSSFNSREYYKHVHETMGLAPDQLDEFYRYFRISGMAHCYYGDGASYIGGSAPSAYSDDPEDNVLMAMVEWVEKGIAPEFIRGTKLDQDGHPQYTRKHCRYPRRNVYRGPGSYLDENAWECVL.

An N-terminal signal peptide occupies residues 1–19 (MKISYFFVASLSYVSVARA). 2 cysteine pairs are disulfide-bonded: C27/C75 and C63/C114. N-linked (GlcNAc...) asparagine glycans are attached at residues N53, N64, N85, N98, and N138. 4 cysteine pairs are disulfide-bonded: C187–C445, C256–C273, C282–C295, and C505–C527. The active-site Acyl-ester intermediate is the S188. N233 carries an N-linked (GlcNAc...) asparagine glycan. Ca(2+)-binding residues include D257, D260, A262, D264, and L266. 3 N-linked (GlcNAc...) asparagine glycosylation sites follow: N286, N290, and N354. Catalysis depends on charge relay system residues D404 and H444.

It belongs to the tannase family.

It is found in the secreted. The catalysed reaction is feruloyl-polysaccharide + H2O = ferulate + polysaccharide.. Functionally, involved in degradation of plant cell walls. Hydrolyzes the feruloyl-arabinose ester bond in arabinoxylans as well as the feruloyl-galactose and feruloyl-arabinose ester bonds in pectin. This is Probable feruloyl esterase B-1 (faeB-1) from Aspergillus terreus (strain NIH 2624 / FGSC A1156).